Here is a 92-residue protein sequence, read N- to C-terminus: MAFVKRDNKNKKRFQQQNPLFKRKRFCRFTVAGVEQIDYKDLDTLKDFIGDNGKITPARLTGTKAHYQRQLDTAIKRARFLALLPYTDLHKN.

It belongs to the bacterial ribosomal protein bS18 family. In terms of assembly, part of the 30S ribosomal subunit. Forms a tight heterodimer with protein bS6.

Its function is as follows. Binds as a heterodimer with protein bS6 to the central domain of the 16S rRNA, where it helps stabilize the platform of the 30S subunit. The protein is Small ribosomal subunit protein bS18 of Cupriavidus taiwanensis (strain DSM 17343 / BCRC 17206 / CCUG 44338 / CIP 107171 / LMG 19424 / R1) (Ralstonia taiwanensis (strain LMG 19424)).